The sequence spans 440 residues: WAS/WASL-interacting protein family member 2 (440 aa).

Pro residues predominate over residues 1–18 (MPIPPPPPPPPGPPPPPT). The tract at residues 1–38 (MPIPPPPPPPPGPPPPPTFNQANTEQPKLSRDEQRNRG) is disordered. The WH2 domain maps to 36-53 (NRGALLQDICKGTKLKKV). An Asymmetric dimethylarginine modification is found at arginine 37. The interval 49–52 (KLKK) is binds actin. 2 disordered regions span residues 56–386 (VNDR…RDSI) and 419–440 (RVYPSKTNRAARGAPPLPPILR). Over residues 116–132 (PSSRAAAPRPPGSAASG) the composition is skewed to low complexity. Pro residues-rich tracts occupy residues 176 to 193 (APPPPPPGRRANAPPTPL), 225 to 236 (PAPPPVKPPPSP), 249 to 262 (APPPPPYRQPPGVP), and 356 to 378 (RGKPPPPPSRTPAGPPPPPPPPL).

The protein belongs to the verprolin family. In terms of assembly, interacts with WASL and WASP, and this interaction results in cytoplasmic relocation of these two proteins along actin filaments. Interacts with NCK2 resulting in the localization to sites of focal adhesions.

The protein localises to the cytoplasm. It localises to the cytoskeleton. Functionally, plays an active role in the formation of cell surface protrusions downstream of activated PDGFB receptors. Plays an important role in actin-microspike formation through cooperation with WASL. May cooperate with WASP and WASL to induce mobilization and reorganization of the actin filament system. This is WAS/WASL-interacting protein family member 2 (Wipf2) from Mus musculus (Mouse).